The primary structure comprises 380 residues: Cytochrome b (380 aa).

Transmembrane regions (helical) follow at residues 34–54 (FGSL…LLAT), 78–99 (WLIR…YLHI), 114–134 (WNTG…GYVL), and 179–199 (FFAL…IHLT). Residues His-84 and His-98 each coordinate heme b. Residues His-183 and His-197 each coordinate heme b. His-202 provides a ligand contact to a ubiquinone. 4 helical membrane passes run 227 to 247 (LKDI…ALFS), 289 to 309 (LGGV…PLLH), 321 to 341 (FSQF…WVGS), and 348 to 368 (FIII…LLFP).

This sequence belongs to the cytochrome b family. As to quaternary structure, the cytochrome bc1 complex contains 11 subunits: 3 respiratory subunits (MT-CYB, CYC1 and UQCRFS1), 2 core proteins (UQCRC1 and UQCRC2) and 6 low-molecular weight proteins (UQCRH/QCR6, UQCRB/QCR7, UQCRQ/QCR8, UQCR10/QCR9, UQCR11/QCR10 and a cleavage product of UQCRFS1). This cytochrome bc1 complex then forms a dimer. It depends on heme b as a cofactor.

It is found in the mitochondrion inner membrane. Component of the ubiquinol-cytochrome c reductase complex (complex III or cytochrome b-c1 complex) that is part of the mitochondrial respiratory chain. The b-c1 complex mediates electron transfer from ubiquinol to cytochrome c. Contributes to the generation of a proton gradient across the mitochondrial membrane that is then used for ATP synthesis. In Alca torda (Razorbill), this protein is Cytochrome b (MT-CYB).